We begin with the raw amino-acid sequence, 397 residues long: Tryptophan synthase beta chain (397 aa).

Lys-87 is modified (N6-(pyridoxal phosphate)lysine).

This sequence belongs to the TrpB family. Tetramer of two alpha and two beta chains. The cofactor is pyridoxal 5'-phosphate.

The catalysed reaction is (1S,2R)-1-C-(indol-3-yl)glycerol 3-phosphate + L-serine = D-glyceraldehyde 3-phosphate + L-tryptophan + H2O. The protein operates within amino-acid biosynthesis; L-tryptophan biosynthesis; L-tryptophan from chorismate: step 5/5. Functionally, the beta subunit is responsible for the synthesis of L-tryptophan from indole and L-serine. This Cronobacter sakazakii (strain ATCC BAA-894) (Enterobacter sakazakii) protein is Tryptophan synthase beta chain.